The primary structure comprises 369 residues: CCA-adding enzyme (369 aa).

ATP-binding residues include G8 and R11. CTP is bound by residues G8 and R11. Mg(2+) contacts are provided by D21 and D23. ATP-binding residues include R91, R137, and R140. Residues R91, R137, and R140 each contribute to the CTP site.

It belongs to the tRNA nucleotidyltransferase/poly(A) polymerase family. Bacterial CCA-adding enzyme type 2 subfamily. The cofactor is Mg(2+).

It carries out the reaction a tRNA precursor + 2 CTP + ATP = a tRNA with a 3' CCA end + 3 diphosphate. It catalyses the reaction a tRNA with a 3' CCA end + 2 CTP + ATP = a tRNA with a 3' CCACCA end + 3 diphosphate. Functionally, catalyzes the addition and repair of the essential 3'-terminal CCA sequence in tRNAs without using a nucleic acid template. Adds these three nucleotides in the order of C, C, and A to the tRNA nucleotide-73, using CTP and ATP as substrates and producing inorganic pyrophosphate. tRNA 3'-terminal CCA addition is required both for tRNA processing and repair. Also involved in tRNA surveillance by mediating tandem CCA addition to generate a CCACCA at the 3' terminus of unstable tRNAs. While stable tRNAs receive only 3'-terminal CCA, unstable tRNAs are marked with CCACCA and rapidly degraded. In Francisella tularensis subsp. novicida (strain U112), this protein is CCA-adding enzyme.